A 1353-amino-acid chain; its full sequence is Adenylate cyclase type 9 (1353 aa).

2 disordered regions span residues 1-27 (MASS…DSNS) and 51-73 (SSSC…GGRL). At 1–117 (MASSPHQQLL…CFPQTQRRFR (117 aa)) the chain is on the cytoplasmic side. Polar residues predominate over residues 16 to 27 (EVSCDSSGDSNS). Positions 51–66 (SSSCSSSGDSGGLPRR) are enriched in low complexity. A helical membrane pass occupies residues 118-138 (YALFYVGFACLLWSIYFAVHM). Topologically, residues 139-141 (KSK) are extracellular. Residues 142–162 (VIVMVVPALCFLVVCVGFFLF) traverse the membrane as a helical segment. Topologically, residues 163–171 (TFTKLYARH) are cytoplasmic. The chain crosses the membrane as a helical span at residues 172–192 (YAWTSLALTLLVFALTLAAQF). Residues 193 to 215 (QVWTPLSGRVDSSNHTLTATPAD) lie on the Extracellular side of the membrane. A glycan (N-linked (GlcNAc...) asparagine) is linked at N206. Residues 216-235 (TCLSQVGSFSICIEVLLLLY) traverse the membrane as a helical segment. At 236 to 241 (TVMQLP) the chain is on the cytoplasmic side. A helical membrane pass occupies residues 242-259 (LYLSLFLGVVYSVLFETF). At 260-280 (GYHFRNEDCYPSPGPGALHWE) the chain is on the extracellular side. The helical transmembrane segment at 281 to 301 (LLSRALLHVCIHAIGIHLFVM) threads the bilayer. The Cytoplasmic portion of the chain corresponds to 302 to 786 (SQVRSRSTFL…VKTFASATFS (485 aa)). The disordered stretch occupies residues 349-375 (QGDEESENSVKRHATSSPKNRKKKSSI). Residues 359–374 (KRHATSSPKNRKKKSS) show a composition bias toward basic residues. Mg(2+)-binding residues include D399, I400, and D443. ATP contacts are provided by residues 399–404 (DIVGFT), 441–443 (LGD), and R487. Disordered stretches follow at residues 596–615 (DSRE…GSVS) and 641–685 (SEAG…EEKL). Phosphoserine is present on residues S610 and S613. Residues 661–676 (STKASGGPNSKTQNGL) show a composition bias toward polar residues. Phosphoserine is present on residues S688, S691, and S706. Residues 787 to 807 (SLLDVFLSTTVFLILSITCFL) traverse the membrane as a helical segment. The Extracellular portion of the chain corresponds to 808–818 (KYGATATPPPP). A helical membrane pass occupies residues 819–839 (AALAVFGADLLLEVLSLIVSI). The Cytoplasmic segment spans residues 840 to 867 (RMVFFLEDVMTCTKWLLEWIAGWLPRHC). Residues 868–888 (IGAILVSLPALAVYSHITSEF) traverse the membrane as a helical segment. Over 889–891 (ETN) the chain is Extracellular. Residues 892–912 (IHVTMFTGSAVLVAVVHYCNF) form a helical membrane-spanning segment. The Cytoplasmic segment spans residues 913 to 920 (CQLSSWMR). The helical transmembrane segment at 921 to 941 (SSLATIVGAGLLLLLHISLCQ) threads the bilayer. Over 942–975 (DSSIVMSPLDSAQNFSAQRNPCNSSVLQDGRRPA) the chain is Extracellular. N-linked (GlcNAc...) asparagine glycans are attached at residues N955 and N964. Residues 976 to 996 (SLIGKELILTFFLLLLLVWFL) traverse the membrane as a helical segment. At 997–1353 (NREFEVSYRL…LSKLNVSKSV (357 aa)) the chain is on the cytoplasmic side. Residues K1108, 1185–1187 (DIW), 1192–1196 (NIASR), and K1232 each bind ATP. S1257, S1259, S1295, S1307, and S1332 each carry phosphoserine. The interval 1290–1314 (KASLGSDDSTQAKEARLSSKRSWRE) is disordered. The span at 1299 to 1314 (TQAKEARLSSKRSWRE) shows a compositional bias: basic and acidic residues.

It belongs to the adenylyl cyclase class-4/guanylyl cyclase family. Requires Mg(2+) as cofactor. Mn(2+) serves as cofactor. Detected in brain, spleen, lung, liver and testis (at protein level). Detected in brain, especially in hippocampus, cerebellum and neocortex. Found in decreasing order in skeletal muscle, heart, adrenal gland, ovary and brain; and to a lesser extent, in kidney, liver, testis, lung, thymus and spleen.

It is found in the cell membrane. The enzyme catalyses ATP = 3',5'-cyclic AMP + diphosphate. Its activity is regulated as follows. Insensitive to calcium/calmodulin, forskolin and somatostatin. Stimulated by beta-adrenergic receptor activation. Activity is down-regulated by calcium/calcineurin. Its function is as follows. Adenylyl cyclase that catalyzes the formation of the signaling molecule cAMP in response to activation of G protein-coupled receptors. Contributes to signaling cascades activated by CRH (corticotropin-releasing factor), corticosteroids and by beta-adrenergic receptors. The polypeptide is Adenylate cyclase type 9 (Adcy9) (Mus musculus (Mouse)).